The following is a 443-amino-acid chain: Anthocyanidin 3-O-glucoside 5-O-glucosyltransferase 2 (443 aa).

The signal sequence occupies residues methionine 1–glutamine 22. Histidine 16 serves as the catalytic Proton acceptor. Residue histidine 16 participates in an anthocyanidin binding. The UDP-alpha-D-glucose site is built by glutamine 340, histidine 355, tryptophan 358, asparagine 359, serine 360, glutamate 363, aspartate 379, and glutamine 380.

It belongs to the UDP-glycosyltransferase family.

The enzyme catalyses an anthocyanidin 3-O-beta-D-glucoside + UDP-alpha-D-glucose = an anthocyanidin 3,5-di-O-beta-D-glucoside + UDP + 2 H(+). It participates in pigment biosynthesis; anthocyanin biosynthesis. Its function is as follows. Catalyzes the glucosylation at the O-5 position of anthocyanidin 3-glucosides to form anthocyanidin 3,5-di-O-glucosides using UDP-glucose as sugar donor. Anthocyanidin 3,5-di-O-glucosides are molecules that are responsible for pigmentation. Also acts on anthocyanidin 3-O-(6-O-malonylglucoside). Much less active with hydroxycinnamoylglucose derivatives. No activity in the absence of the 3-O-glucoside group. This chain is Anthocyanidin 3-O-glucoside 5-O-glucosyltransferase 2 (PF3R6), found in Perilla frutescens (Beefsteak mint).